We begin with the raw amino-acid sequence, 129 residues long: Large ribosomal subunit protein uL14m (129 aa).

It belongs to the universal ribosomal protein uL14 family.

Its subcellular location is the mitochondrion. This chain is Large ribosomal subunit protein uL14m (RPL14), found in Acanthamoeba castellanii (Amoeba).